A 785-amino-acid polypeptide reads, in one-letter code: Peptide transporter family 2 (785 aa).

9 consecutive transmembrane segments (helical) span residues 46-66, 72-92, 99-119, 134-154, 167-187, 208-228, 303-323, 345-365, and 382-402; these read FSFY…LNFS, VLFH…SILA, FWTI…LAFS, LLGL…VSAF, ISLF…ISMW, FGIP…GSFW, VIVM…QGST, MGVL…SIVY, and AGGG…QLFV. Asn467 carries an N-linked (GlcNAc...) asparagine glycan. Helical transmembrane passes span 670–690, 711–731, and 738–758; these read ILWQ…FSIT, WLFT…LNIF, and MFVF…LAVF.

Belongs to the major facilitator superfamily. Proton-dependent oligopeptide transporter (POT/PTR) (TC 2.A.17) family. In terms of tissue distribution, expressed in vulval, pharyngeal and anal muscles.

The protein localises to the membrane. In terms of biological role, proton-dependent uptake of di- or tripeptides, and to a minor extent tetrapeptides. Transport is independent of sodium and chloride ions. Protein shows high affinity to peptide substrates. The protein is Peptide transporter family 2 (pept-2) of Caenorhabditis elegans.